A 568-amino-acid polypeptide reads, in one-letter code: Putative F-box protein At5g39480 (568 aa).

The region spanning Ala-9–Gln-55 is the F-box domain. The interval Thr-315–Ser-337 is disordered. Residues Ser-321–Ser-332 show a composition bias toward low complexity.

The chain is Putative F-box protein At5g39480 from Arabidopsis thaliana (Mouse-ear cress).